Consider the following 546-residue polypeptide: Chaperonin GroEL (546 aa).

ATP contacts are provided by residues 29–32 (TLGP), lysine 50, 86–90 (DGTTT), glycine 414, and aspartate 494. Residues 525 to 546 (KKESAAPAMPGHDGMGGMGGMM) form a disordered region. The span at 537–546 (DGMGGMGGMM) shows a compositional bias: gly residues.

The protein belongs to the chaperonin (HSP60) family. In terms of assembly, forms a cylinder of 14 subunits composed of two heptameric rings stacked back-to-back. Interacts with the co-chaperonin GroES.

It localises to the cytoplasm. It catalyses the reaction ATP + H2O + a folded polypeptide = ADP + phosphate + an unfolded polypeptide.. Together with its co-chaperonin GroES, plays an essential role in assisting protein folding. The GroEL-GroES system forms a nano-cage that allows encapsulation of the non-native substrate proteins and provides a physical environment optimized to promote and accelerate protein folding. The protein is Chaperonin GroEL of Bdellovibrio bacteriovorus (strain ATCC 15356 / DSM 50701 / NCIMB 9529 / HD100).